The sequence spans 58 residues: Gene 72 protein (58 aa).

The sequence is that of Gene 72 protein (72) from Mycobacterium phage L5 (Mycobacteriophage L5).